We begin with the raw amino-acid sequence, 104 residues long: Protein enhancer of rudimentary (104 aa).

Residue T18 is modified to Phosphothreonine; by CK2. At S24 the chain carries Phosphoserine; by CK2.

It belongs to the E(R) family.

Its function is as follows. Acts as an enhancer of the rudimentary gene. Has a role in pyrimidine biosynthesis and the cell cycle. This Drosophila virilis (Fruit fly) protein is Protein enhancer of rudimentary (e(r)).